The primary structure comprises 166 residues: 2-C-methyl-D-erythritol 2,4-cyclodiphosphate synthase (166 aa).

Residues D12 and H14 each coordinate a divalent metal cation. Residues 12–14 (DVH) and 38–39 (HS) each bind 4-CDP-2-C-methyl-D-erythritol 2-phosphate. H46 contacts a divalent metal cation. 4-CDP-2-C-methyl-D-erythritol 2-phosphate contacts are provided by residues 60–62 (DIG), 136–139 (TTSE), F143, and R146.

The protein belongs to the IspF family. In terms of assembly, homotrimer. Requires a divalent metal cation as cofactor.

The enzyme catalyses 4-CDP-2-C-methyl-D-erythritol 2-phosphate = 2-C-methyl-D-erythritol 2,4-cyclic diphosphate + CMP. It functions in the pathway isoprenoid biosynthesis; isopentenyl diphosphate biosynthesis via DXP pathway; isopentenyl diphosphate from 1-deoxy-D-xylulose 5-phosphate: step 4/6. Involved in the biosynthesis of isopentenyl diphosphate (IPP) and dimethylallyl diphosphate (DMAPP), two major building blocks of isoprenoid compounds. Catalyzes the conversion of 4-diphosphocytidyl-2-C-methyl-D-erythritol 2-phosphate (CDP-ME2P) to 2-C-methyl-D-erythritol 2,4-cyclodiphosphate (ME-CPP) with a corresponding release of cytidine 5-monophosphate (CMP). This Xanthomonas axonopodis pv. citri (strain 306) protein is 2-C-methyl-D-erythritol 2,4-cyclodiphosphate synthase.